Consider the following 142-residue polypeptide: ATP synthase epsilon chain (142 aa).

This sequence belongs to the ATPase epsilon chain family. F-type ATPases have 2 components, CF(1) - the catalytic core - and CF(0) - the membrane proton channel. CF(1) has five subunits: alpha(3), beta(3), gamma(1), delta(1), epsilon(1). CF(0) has three main subunits: a, b and c.

It is found in the cell inner membrane. Functionally, produces ATP from ADP in the presence of a proton gradient across the membrane. This is ATP synthase epsilon chain from Shewanella baltica (strain OS155 / ATCC BAA-1091).